An 86-amino-acid polypeptide reads, in one-letter code: RNA-binding protein Hfq (86 aa).

A Sm domain is found at 12–73 (DIFLNQVRKE…ISTITPQKPV (62 aa)).

This sequence belongs to the Hfq family. In terms of assembly, homohexamer.

In terms of biological role, RNA chaperone that binds small regulatory RNA (sRNAs) and mRNAs to facilitate mRNA translational regulation in response to envelope stress, environmental stress and changes in metabolite concentrations. Also binds with high specificity to tRNAs. The polypeptide is RNA-binding protein Hfq (Thermoanaerobacter pseudethanolicus (strain ATCC 33223 / 39E) (Clostridium thermohydrosulfuricum)).